The primary structure comprises 285 residues: 4-diphosphocytidyl-2-C-methyl-D-erythritol kinase (285 aa).

Lys-28 is a catalytic residue. 109 to 119 (PVAAGLGGGSA) provides a ligand contact to ATP. The active site involves Asp-148.

This sequence belongs to the GHMP kinase family. IspE subfamily.

It catalyses the reaction 4-CDP-2-C-methyl-D-erythritol + ATP = 4-CDP-2-C-methyl-D-erythritol 2-phosphate + ADP + H(+). The protein operates within isoprenoid biosynthesis; isopentenyl diphosphate biosynthesis via DXP pathway; isopentenyl diphosphate from 1-deoxy-D-xylulose 5-phosphate: step 3/6. Its function is as follows. Catalyzes the phosphorylation of the position 2 hydroxy group of 4-diphosphocytidyl-2C-methyl-D-erythritol. The chain is 4-diphosphocytidyl-2-C-methyl-D-erythritol kinase from Novosphingobium aromaticivorans (strain ATCC 700278 / DSM 12444 / CCUG 56034 / CIP 105152 / NBRC 16084 / F199).